The chain runs to 78 residues: Small ribosomal subunit protein bS18 (78 aa).

It belongs to the bacterial ribosomal protein bS18 family. In terms of assembly, part of the 30S ribosomal subunit. Forms a tight heterodimer with protein bS6.

Binds as a heterodimer with protein bS6 to the central domain of the 16S rRNA, where it helps stabilize the platform of the 30S subunit. This is Small ribosomal subunit protein bS18 from Parafrankia sp. (strain EAN1pec).